The chain runs to 307 residues: uncharacterized protein (307 aa).

Composition is skewed to basic and acidic residues over residues 42–52 and 112–121; these read TCRSPGEDKCP and QKKEEPEGSH. Positions 42 to 153 are disordered; the sequence is TCRSPGEDKC…VPPAVASASA (112 aa). The segment covering 129 to 139 has biased composition (basic residues); sequence KQHKKAKKRKS.

This is an uncharacterized protein from Mus musculus (Mouse).